The primary structure comprises 309 residues: S-methyl-5'-thioadenosine phosphorylase (309 aa).

Residues T19, R64 to H65, and S97 to A98 contribute to the phosphate site. M201 is a binding site for substrate. Residue S202 coordinates phosphate. D225 to D227 is a binding site for substrate.

It belongs to the PNP/MTAP phosphorylase family. MTAP subfamily. Homotrimer.

The protein resides in the cytoplasm. The protein localises to the nucleus. The catalysed reaction is S-methyl-5'-thioadenosine + phosphate = 5-(methylsulfanyl)-alpha-D-ribose 1-phosphate + adenine. It functions in the pathway amino-acid biosynthesis; L-methionine biosynthesis via salvage pathway; S-methyl-5-thio-alpha-D-ribose 1-phosphate from S-methyl-5'-thioadenosine (phosphorylase route): step 1/1. Its function is as follows. Catalyzes the reversible phosphorylation of S-methyl-5'-thioadenosine (MTA) to adenine and 5-methylthioribose-1-phosphate. Involved in the breakdown of MTA, a major by-product of polyamine biosynthesis. Responsible for the first step in the methionine salvage pathway after MTA has been generated from S-adenosylmethionine. Has broad substrate specificity with 6-aminopurine nucleosides as preferred substrates. In Tuber melanosporum (strain Mel28) (Perigord black truffle), this protein is S-methyl-5'-thioadenosine phosphorylase.